Here is a 377-residue protein sequence, read N- to C-terminus: 23S rRNA (uracil(747)-C(5))-methyltransferase RlmC (377 aa).

Positions 3, 11, 14, and 87 each coordinate [4Fe-4S] cluster. S-adenosyl-L-methionine contacts are provided by Gln212, Phe241, Glu262, and Asn307. Residue Cys334 is the Nucleophile of the active site.

The protein belongs to the class I-like SAM-binding methyltransferase superfamily. RNA M5U methyltransferase family. RlmC subfamily.

It catalyses the reaction uridine(747) in 23S rRNA + S-adenosyl-L-methionine = 5-methyluridine(747) in 23S rRNA + S-adenosyl-L-homocysteine + H(+). Its function is as follows. Catalyzes the formation of 5-methyl-uridine at position 747 (m5U747) in 23S rRNA. The protein is 23S rRNA (uracil(747)-C(5))-methyltransferase RlmC of Xenorhabdus bovienii (strain SS-2004) (Xenorhabdus nematophila subsp. bovienii).